Reading from the N-terminus, the 272-residue chain is UPF0759 protein YecE (272 aa).

It belongs to the UPF0759 family.

This Escherichia coli (strain K12) protein is UPF0759 protein YecE (yecE).